The chain runs to 957 residues: Thioredoxin domain-containing protein 11 (957 aa).

Over residues 1-13 (MSECGGRGGGGGS) the composition is skewed to gly residues. The interval 1–47 (MSECGGRGGGGGSSSSSDDAEDEGGGGGPAGSGSLSPAPAASSEGRL) is disordered. Residues 32 to 44 (SGSLSPAPAASSE) show a composition bias toward low complexity. The chain crosses the membrane as a helical span at residues 64 to 84 (LLCGAVALGCALLLALKFTCS). The 123-residue stretch at 91 to 213 (IPAKPPVSFF…IEKFVRRVMK (123 aa)) folds into the Thioredoxin 1 domain. 2 cysteine pairs are disulfide-bonded: Cys-441–Cys-444 and Cys-691–Cys-694. The Thioredoxin 2 domain occupies 621-771 (LDPKQALMKF…LLRFILHHSD (151 aa)). Positions 785–889 (AECLQNEAVL…ADASETLLTE (105 aa)) form a coiled coil. Residues 904-925 (LEGRDGADDRVPPSKARSEHPE) are compositionally biased toward basic and acidic residues. The disordered stretch occupies residues 904–957 (LEGRDGADDRVPPSKARSEHPEPPGAPRLPASTPLPANISSTLASEGSPENRTD). Residues 941 to 951 (NISSTLASEGS) are compositionally biased toward polar residues.

Belongs to the protein disulfide isomerase family. As to quaternary structure, interacts with the cytoplasmic part of DUOX1 and DUOX2. Interacts with TPO and CYBA.

It is found in the endoplasmic reticulum membrane. In terms of biological role, may act as a redox regulator involved in DUOX proteins folding. The interaction with DUOX1 and DUOX2 suggest that it belongs to a multiprotein complex constituting the thyroid H(2)O(2) generating system. It is however not sufficient to assist DUOX1 and DUOX2 in H(2)O(2) generation. This chain is Thioredoxin domain-containing protein 11 (TXNDC11), found in Bos taurus (Bovine).